Here is a 251-residue protein sequence, read N- to C-terminus: LexA repressor (251 aa).

The segment at residues 26–46 (FDEMKDALGLKSKSGIHRLIK) is a DNA-binding region (H-T-H motif). Residues Ser172 and Lys210 each act as for autocatalytic cleavage activity in the active site.

Belongs to the peptidase S24 family. As to quaternary structure, homodimer.

The catalysed reaction is Hydrolysis of Ala-|-Gly bond in repressor LexA.. Represses a number of genes involved in the response to DNA damage (SOS response), including recA and lexA. In the presence of single-stranded DNA, RecA interacts with LexA causing an autocatalytic cleavage which disrupts the DNA-binding part of LexA, leading to derepression of the SOS regulon and eventually DNA repair. In Rhodospirillum rubrum (strain ATCC 11170 / ATH 1.1.1 / DSM 467 / LMG 4362 / NCIMB 8255 / S1), this protein is LexA repressor.